Consider the following 368-residue polypeptide: Phospho-N-acetylmuramoyl-pentapeptide-transferase (368 aa).

A run of 9 helical transmembrane segments spans residues 50 to 70 (LLALGLGFSLAAIAGYWVVPL), 95 to 115 (PTMGGIFAIPAGLLPALILAG), 117 to 137 (SPLVWALAFVTLAYATIGWLD), 156 to 176 (LCLQFGAAFLFCLWLISQQGW), 183 to 203 (ITLPFGWSLALSLLFWPLAVF), 218 to 238 (LDGLAGGTGAAVLAGLGLWLA), 242 to 262 (PAIATFCCSLAGGFLGFLLHN), 284 to 304 (AIAIVANCLWVLLVMGGLFVL), and 347 to 367 (TQVVASFYGLTLLLIASCWLL).

This sequence belongs to the glycosyltransferase 4 family. MraY subfamily. It depends on Mg(2+) as a cofactor.

The protein localises to the cell inner membrane. The catalysed reaction is UDP-N-acetyl-alpha-D-muramoyl-L-alanyl-gamma-D-glutamyl-meso-2,6-diaminopimeloyl-D-alanyl-D-alanine + di-trans,octa-cis-undecaprenyl phosphate = di-trans,octa-cis-undecaprenyl diphospho-N-acetyl-alpha-D-muramoyl-L-alanyl-D-glutamyl-meso-2,6-diaminopimeloyl-D-alanyl-D-alanine + UMP. It participates in cell wall biogenesis; peptidoglycan biosynthesis. Its function is as follows. Catalyzes the initial step of the lipid cycle reactions in the biosynthesis of the cell wall peptidoglycan: transfers peptidoglycan precursor phospho-MurNAc-pentapeptide from UDP-MurNAc-pentapeptide onto the lipid carrier undecaprenyl phosphate, yielding undecaprenyl-pyrophosphoryl-MurNAc-pentapeptide, known as lipid I. In Synechococcus sp. (strain ATCC 27144 / PCC 6301 / SAUG 1402/1) (Anacystis nidulans), this protein is Phospho-N-acetylmuramoyl-pentapeptide-transferase.